A 477-amino-acid chain; its full sequence is Methylenetetrahydrofolate--tRNA-(uracil-5-)-methyltransferase TrmFO (477 aa).

14–19 is an FAD binding site; it reads GGGLAG.

This sequence belongs to the MnmG family. TrmFO subfamily. FAD serves as cofactor.

Its subcellular location is the cytoplasm. It catalyses the reaction uridine(54) in tRNA + (6R)-5,10-methylene-5,6,7,8-tetrahydrofolate + NADH + H(+) = 5-methyluridine(54) in tRNA + (6S)-5,6,7,8-tetrahydrofolate + NAD(+). It carries out the reaction uridine(54) in tRNA + (6R)-5,10-methylene-5,6,7,8-tetrahydrofolate + NADPH + H(+) = 5-methyluridine(54) in tRNA + (6S)-5,6,7,8-tetrahydrofolate + NADP(+). Functionally, catalyzes the folate-dependent formation of 5-methyl-uridine at position 54 (M-5-U54) in all tRNAs. The chain is Methylenetetrahydrofolate--tRNA-(uracil-5-)-methyltransferase TrmFO from Rhizobium etli (strain ATCC 51251 / DSM 11541 / JCM 21823 / NBRC 15573 / CFN 42).